The sequence spans 556 residues: Dihydroxy-acid dehydratase (556 aa).

Cys47 serves as a coordination point for [2Fe-2S] cluster. Asp79 is a Mg(2+) binding site. Cys120 is a binding site for [2Fe-2S] cluster. 2 residues coordinate Mg(2+): Asp121 and Lys122. Lys122 is modified (N6-carboxylysine). Cys192 is a [2Fe-2S] cluster binding site. Glu444 is a Mg(2+) binding site. Ser470 serves as the catalytic Proton acceptor.

The protein belongs to the IlvD/Edd family. As to quaternary structure, homodimer. It depends on [2Fe-2S] cluster as a cofactor. The cofactor is Mg(2+).

It carries out the reaction (2R)-2,3-dihydroxy-3-methylbutanoate = 3-methyl-2-oxobutanoate + H2O. The catalysed reaction is (2R,3R)-2,3-dihydroxy-3-methylpentanoate = (S)-3-methyl-2-oxopentanoate + H2O. The protein operates within amino-acid biosynthesis; L-isoleucine biosynthesis; L-isoleucine from 2-oxobutanoate: step 3/4. Its pathway is amino-acid biosynthesis; L-valine biosynthesis; L-valine from pyruvate: step 3/4. Its function is as follows. Functions in the biosynthesis of branched-chain amino acids. Catalyzes the dehydration of (2R,3R)-2,3-dihydroxy-3-methylpentanoate (2,3-dihydroxy-3-methylvalerate) into 2-oxo-3-methylpentanoate (2-oxo-3-methylvalerate) and of (2R)-2,3-dihydroxy-3-methylbutanoate (2,3-dihydroxyisovalerate) into 2-oxo-3-methylbutanoate (2-oxoisovalerate), the penultimate precursor to L-isoleucine and L-valine, respectively. This is Dihydroxy-acid dehydratase from Prochlorococcus marinus (strain MIT 9303).